The following is a 342-amino-acid chain: Pre-mRNA-splicing factor 18 (342 aa).

At Met1 the chain carries N-acetylmethionine.

This sequence belongs to the PRP18 family. Heterodimer with PPIH. Interacts with PRPF4 and with the spliceosome. Part of a complex containing U4/U6 snRNPs. Also detected in the cytoplasm. As to expression, detected in brain, heart, liver and skeletal muscle.

The protein localises to the nucleus speckle. Its function is as follows. Participates in the second step of pre-mRNA splicing. Down-regulates the expression of potassium channel subunits. This Rattus norvegicus (Rat) protein is Pre-mRNA-splicing factor 18 (Prpf18).